A 109-amino-acid polypeptide reads, in one-letter code: UPF0060 membrane protein mma_0129 (109 aa).

The next 4 membrane-spanning stretches (helical) occupy residues 7-27 (VALFVLTAIAEIVGCYLPYLW), 31-51 (GASIWLLVPAALALGIFVWLL), 63-83 (AAYGGAYVAVALAWLWVVDGI), and 87-107 (NWDFVGVAVTLAGMGIILFAP).

It belongs to the UPF0060 family.

The protein resides in the cell inner membrane. The polypeptide is UPF0060 membrane protein mma_0129 (Janthinobacterium sp. (strain Marseille) (Minibacterium massiliensis)).